A 240-amino-acid polypeptide reads, in one-letter code: Ubiquinone biosynthesis O-methyltransferase (240 aa).

Positions 44, 64, 85, and 129 each coordinate S-adenosyl-L-methionine.

It belongs to the methyltransferase superfamily. UbiG/COQ3 family.

The enzyme catalyses a 3-demethylubiquinol + S-adenosyl-L-methionine = a ubiquinol + S-adenosyl-L-homocysteine + H(+). It catalyses the reaction a 3-(all-trans-polyprenyl)benzene-1,2-diol + S-adenosyl-L-methionine = a 2-methoxy-6-(all-trans-polyprenyl)phenol + S-adenosyl-L-homocysteine + H(+). Its pathway is cofactor biosynthesis; ubiquinone biosynthesis. O-methyltransferase that catalyzes the 2 O-methylation steps in the ubiquinone biosynthetic pathway. The sequence is that of Ubiquinone biosynthesis O-methyltransferase from Escherichia coli (strain SMS-3-5 / SECEC).